Consider the following 595-residue polypeptide: Probable serine/threonine-protein kinase fhkC (595 aa).

Residues 1-84 (MNSNKEETTA…MTEDNSKEED (84 aa)) are disordered. Low complexity predominate over residues 18 to 31 (EEQQQQQQPQQQEQ). The span at 32–49 (INTTTASTTSNGENTASD) shows a compositional bias: polar residues. Low complexity predominate over residues 50–70 (NNNNSNNNNNNNTNNTNTNNN). In terms of domain architecture, FHA spans 116–170 (IILGRSKGVCNYTFTSPTVSGKHCKIYRDPTVKSRNVAFVDDTSTNGTFINNEVI). A Protein kinase domain is found at 218–479 (YDLREVLGTG…IDQALNHPWF (262 aa)). ATP-binding positions include 224-232 (LGTGNFASV) and K247. The active-site Proton acceptor is D342. T377 carries the post-translational modification Phosphothreonine; by autocatalysis. A disordered region spans residues 494–595 (KLEFPPPSTN…DEHEQKKVKN (102 aa)). Over residues 508-520 (PTPNTTSSNSQLV) the composition is skewed to polar residues. Positions 530–567 (DNTTDNNNNNNNNNNNNNNNNNNNTTNNSNNIDNNNGN) are enriched in low complexity. Residues 585 to 595 (NDEHEQKKVKN) show a composition bias toward basic and acidic residues.

Belongs to the protein kinase superfamily. CAMK Ser/Thr protein kinase family. CHK2 subfamily.

It carries out the reaction L-seryl-[protein] + ATP = O-phospho-L-seryl-[protein] + ADP + H(+). The catalysed reaction is L-threonyl-[protein] + ATP = O-phospho-L-threonyl-[protein] + ADP + H(+). The sequence is that of Probable serine/threonine-protein kinase fhkC (fhkC) from Dictyostelium discoideum (Social amoeba).